Reading from the N-terminus, the 508-residue chain is Photosystem II CP47 reaction center protein (508 aa).

The next 6 membrane-spanning stretches (helical) occupy residues 21 to 36 (SVHIMHTALVAGWAGS), 101 to 115 (IVFSGLCFLAAIWHW), 140 to 156 (GIHLFLSGVACFGFGAF), 203 to 218 (IAAGTLGILAGLFHLS), 237 to 252 (VLSSSIAAVFFAAFVV), and 457 to 472 (SFALLFFFGHIWHGSR).

The protein belongs to the PsbB/PsbC family. PsbB subfamily. In terms of assembly, PSII is composed of 1 copy each of membrane proteins PsbA, PsbB, PsbC, PsbD, PsbE, PsbF, PsbH, PsbI, PsbJ, PsbK, PsbL, PsbM, PsbT, PsbX, PsbY, PsbZ, Psb30/Ycf12, at least 3 peripheral proteins of the oxygen-evolving complex and a large number of cofactors. It forms dimeric complexes. Binds multiple chlorophylls. PSII binds additional chlorophylls, carotenoids and specific lipids. serves as cofactor.

The protein resides in the plastid. Its subcellular location is the chloroplast thylakoid membrane. Its function is as follows. One of the components of the core complex of photosystem II (PSII). It binds chlorophyll and helps catalyze the primary light-induced photochemical processes of PSII. PSII is a light-driven water:plastoquinone oxidoreductase, using light energy to abstract electrons from H(2)O, generating O(2) and a proton gradient subsequently used for ATP formation. This is Photosystem II CP47 reaction center protein from Lepidium virginicum (Virginia pepperweed).